Consider the following 430-residue polypeptide: Probable transporter SCO4007 (430 aa).

Over residues 1-17 (MPSSPSSTTPAPTSTPA) the composition is skewed to low complexity. Residues 1 to 26 (MPSSPSSTTPAPTSTPAARREPSGKG) form a disordered region. A run of 11 helical transmembrane segments spans residues 34–54 (LFLP…YLAA), 70–90 (AVAW…LFFA), 101–121 (LVAA…ASAG), 126–146 (AGAV…VPLV), 159–179 (VAAV…LGGL), 188–208 (AVFV…AYIL), 244–264 (AGMY…LTEG), 275–295 (GLFG…GGLV), 315–335 (VPLF…AVLV), 362–382 (TAYV…AGPA), and 383–403 (FGHW…VLGW).

Belongs to the major facilitator superfamily.

The protein resides in the cell membrane. The chain is Probable transporter SCO4007 from Streptomyces coelicolor (strain ATCC BAA-471 / A3(2) / M145).